We begin with the raw amino-acid sequence, 208 residues long: Cysteine-rich protein 2 (208 aa).

The LIM zinc-binding 1 domain occupies 5-57 (CPKCDKTVCFAEKVSSLGKDWHKFCLKCERCSKTLTPGGHAEHDGKPFCHKPC). K23 is subject to N6-acetyllysine. The tract at residues 98 to 119 (AEERKASGPPKGPSRASSVTTF) is disordered. S104 is modified (phosphoserine). One can recognise an LIM zinc-binding 2 domain in the interval 126–178 (CPRCSKKVYFAEKVTSLGKDWHRPCLHCERCGKTLTPGGHAEHDGQPYCHKPC). N6-acetyllysine is present on residues K138 and K144.

Interacts with TGFB1I1.

This is Cysteine-rich protein 2 (CRIP2) from Pongo abelii (Sumatran orangutan).